The chain runs to 343 residues: MTVEVEAVTMAKEEQPEEEEVIEKLVEKITGLAAAIGKLPSLSPSPEVNALFTELVMTCIPPSSVDVEQLGAEAQDMRGRLIRLCADAEGHLEAHYSDVLAAHDNPLDHLALFPYFNNYIQLAQLEYALLARHLPAAPPPSRLAFLGSGPLPLSSLVLAARHLPAASFHNYDICADANRRASRLVRADRDLSARMAFHTSDVAHVTTDLAAYDVVFLAALVGMAAEEKARMVEHLGKHMAPGAALVVRSAHGARGFLYPVVDPEEIRRGGFDVLAVHHPEGEVINSVIIARKPPVAAPALEGGDAHAHGHGAVVSRPCQRCEMEARAHQKMEDMSAMEKLPSS.

The protein belongs to the nicotianamine synthase (NAS)-like family. As to expression, expressed in leaves.

It catalyses the reaction 3 S-adenosyl-L-methionine = nicotianamine + 3 S-methyl-5'-thioadenosine + 3 H(+). Synthesizes nicotianamine, a polyamine that is the first intermediate in the synthesis of the phytosiderophores of the mugineic acid type found in gramineae which serve as a sensor for the physiological iron status within the plant, and/or might be involved in the transport of iron. This chain is Nicotianamine synthase 3 (NAS3), found in Oryza sativa subsp. indica (Rice).